Consider the following 236-residue polypeptide: Phosphoribosylaminoimidazole-succinocarboxamide synthase (236 aa).

It belongs to the SAICAR synthetase family.

It catalyses the reaction 5-amino-1-(5-phospho-D-ribosyl)imidazole-4-carboxylate + L-aspartate + ATP = (2S)-2-[5-amino-1-(5-phospho-beta-D-ribosyl)imidazole-4-carboxamido]succinate + ADP + phosphate + 2 H(+). Its pathway is purine metabolism; IMP biosynthesis via de novo pathway; 5-amino-1-(5-phospho-D-ribosyl)imidazole-4-carboxamide from 5-amino-1-(5-phospho-D-ribosyl)imidazole-4-carboxylate: step 1/2. This chain is Phosphoribosylaminoimidazole-succinocarboxamide synthase (purC), found in Rickettsia prowazekii (strain Madrid E).